We begin with the raw amino-acid sequence, 318 residues long: Thymidylate synthase (318 aa).

DUMP is bound by residues R25 and 180–181 (RR). The Nucleophile role is filled by C200. Residues 220–223 (RSGD), N231, and 261–263 (HIY) each bind dUMP. Position 223 (D223) interacts with (6R)-5,10-methylene-5,6,7,8-tetrahydrofolate. Residue A317 coordinates (6R)-5,10-methylene-5,6,7,8-tetrahydrofolate.

Belongs to the thymidylate synthase family. Bacterial-type ThyA subfamily. In terms of assembly, homodimer.

Its subcellular location is the cytoplasm. It catalyses the reaction dUMP + (6R)-5,10-methylene-5,6,7,8-tetrahydrofolate = 7,8-dihydrofolate + dTMP. It participates in pyrimidine metabolism; dTTP biosynthesis. Its function is as follows. Catalyzes the reductive methylation of 2'-deoxyuridine-5'-monophosphate (dUMP) to 2'-deoxythymidine-5'-monophosphate (dTMP) while utilizing 5,10-methylenetetrahydrofolate (mTHF) as the methyl donor and reductant in the reaction, yielding dihydrofolate (DHF) as a by-product. This enzymatic reaction provides an intracellular de novo source of dTMP, an essential precursor for DNA biosynthesis. This Bacillus cereus (strain ATCC 10987 / NRS 248) protein is Thymidylate synthase.